The primary structure comprises 96 residues: Large ribosomal subunit protein bL21 (96 aa).

It belongs to the bacterial ribosomal protein bL21 family. As to quaternary structure, part of the 50S ribosomal subunit. Contacts protein L20.

Its function is as follows. This protein binds to 23S rRNA in the presence of protein L20. This Hydrogenobaculum sp. (strain Y04AAS1) protein is Large ribosomal subunit protein bL21.